Here is a 298-residue protein sequence, read N- to C-terminus: Protoheme IX farnesyltransferase (298 aa).

Transmembrane regions (helical) follow at residues 23–43 (LLLL…GKPY), 47–67 (LVVL…NMYF), 93–113 (VFIA…RIIN), 115–135 (HFAL…TYLL), 143–163 (IIAG…AAAG), 169–189 (ALLF…FLAT), 211–231 (IAVA…IVGL), 236–256 (VIGT…FHLA), and 278–298 (MMLG…YIIS).

Belongs to the UbiA prenyltransferase family. Protoheme IX farnesyltransferase subfamily.

The protein localises to the cell membrane. The catalysed reaction is heme b + (2E,6E)-farnesyl diphosphate + H2O = Fe(II)-heme o + diphosphate. The protein operates within porphyrin-containing compound metabolism; heme O biosynthesis; heme O from protoheme: step 1/1. Its function is as follows. Converts heme B (protoheme IX) to heme O by substitution of the vinyl group on carbon 2 of heme B porphyrin ring with a hydroxyethyl farnesyl side group. This Hyperthermus butylicus (strain DSM 5456 / JCM 9403 / PLM1-5) protein is Protoheme IX farnesyltransferase.